The sequence spans 322 residues: 2-methylene-furan-3-one reductase (322 aa).

NADP(+) is bound by residues Lys59, 174–175 (GV), 197–200 (STKK), Tyr215, Ile253, 264–266 (FVL), and 311–312 (RA). Lys59 contributes to the substrate binding site.

It belongs to the zinc-containing alcohol dehydrogenase family. Quinone oxidoreductase subfamily. As to quaternary structure, monomer.

The catalysed reaction is 4-hydroxy-2,5-dimethyl-furan-3(2H)-one + NADP(+) = 4-hydroxy-5-methyl-2-methylenefuran-3(2H)-one + NADPH + H(+). Functionally, enone oxidoreductase involved in the biosynthesis of 4-hydroxy-2,5-dimethyl-3(2H)-furanone (HDMF or furaneol), the key flavor compound in strawberries. The polypeptide is 2-methylene-furan-3-one reductase (EO) (Fragaria vesca (Woodland strawberry)).